The primary structure comprises 397 residues: HTH-type transcriptional regulator GalR (397 aa).

HTH lysR-type domains lie at 7–64 and 99–156; these read PNLM…MRLT and FQAR…LQPT. 2 DNA-binding regions (H-T-H motif) span residues 24–43 and 116–135; these read VSRA…RAIA and MQTV…AALK.

Belongs to the LysR transcriptional regulatory family.

In terms of biological role, transcriptional regulator for the galBCD and galTAP operons, encoding genes of the gallate degradation pathway. This Pseudomonas putida (strain ATCC 47054 / DSM 6125 / CFBP 8728 / NCIMB 11950 / KT2440) protein is HTH-type transcriptional regulator GalR (galR).